We begin with the raw amino-acid sequence, 1022 residues long: MTLGESEKRYRISDIARELQLSPQEVLQFVKQQGVKVASTSSMVNEEVHGLIINQFSAEKKMVDETLKIRAEKEKRLTRLEEQSRKTLEKEQHLMEAISPTVRASKSSAKGSESAPKSEPKKSKQAVPAAAMVDDVPAAVVQQVVAEPEVVEPTPVVEVEAPALEPAIISEHVVDAEPIENAVTVAPVEVVVNEPIETVESVEPEFVVAEVTPLEPIAQSTIEIVAEGESVEVAEALHVAEPVVAIPPITETAELSDSTVEPIEPIASVPSTAPAPPARREPTVNENLVSFAAPQMMGGLTVVGTLDMHTGRGRKNRKKNFREQADALKGEFEVKAAAPVASENKTEAGVAKKSKPAAEVKPKPATTTAADDAKKAKKGKKKKKPDVDEKVISANIQKTISGIDDRSGTGSRQKFRKMRRSEREREQEEGAAQRELEQSIVRVTEFASPHELAELMGITAKDIIQKCFGLGKFVTINQRLDRESIELIALEFGFEAEFISEVEATAVETEADAEEDLQTRPPVVTIMGHVDHGKTSLLDYIRKSRVVAGESGGITQHIGAYEVTVDGDRKITFLDTPGHEAFTAMRARGAQVTDIVILVVAADDNVMPQTIEAINHAKAAGVPIVVALNKIDKSEANPDKIKTQLSEAGVLIEEWGGVYQCQEISAKKGIGIVELMEKVLTEAELRELKGNYSREVLASGVIVESELDKGKGVVSTVLVQRGVLKVGDPFVAGNSLGKVRALMDERGKRILLAFPSQPVRVLGFEDLPQSGDVLTVMASERDARDLAQKRQIIRREHDFRRSTRVKLDSIARQIREGVMKELNVIIKADTDGSIQALADGLMKIQNDEVKVQLIHQGVGQITETDVLLAAASDAIIIGFRVRPNVNAKKLAEKEDLDIRFYSVIYHVLEDVETALEGMLSPELHEESLGSIEIRQIFRVPKVGNVGGCYVLEGKVPRDAKVRLLRDGVQIYEGQLAALKRFKDDVKEVDSGYECGLSLKNYDDIKVGDVVEAYRIVEKKRKL.

The span at 82–94 (EQSRKTLEKEQHL) shows a compositional bias: basic and acidic residues. 2 disordered regions span residues 82–129 (EQSR…AVPA) and 342–436 (SENK…QREL). A compositionally biased stretch (low complexity) spans 104-115 (ASKSSAKGSESA). Positions 375 to 384 (KAKKGKKKKK) are enriched in basic residues. The span at 421–436 (SEREREQEEGAAQREL) shows a compositional bias: basic and acidic residues. Residues 519–689 (TRPPVVTIMG…LTEAELRELK (171 aa)) enclose the tr-type G domain. Residues 528–535 (GHVDHGKT) are G1. Position 528–535 (528–535 (GHVDHGKT)) interacts with GTP. Residues 553 to 557 (GITQH) form a G2 region. Residues 575–578 (DTPG) are G3. GTP is bound by residues 575–579 (DTPGH) and 629–632 (NKID). The G4 stretch occupies residues 629–632 (NKID). The segment at 665 to 667 (SAK) is G5.

The protein belongs to the TRAFAC class translation factor GTPase superfamily. Classic translation factor GTPase family. IF-2 subfamily.

The protein localises to the cytoplasm. Its function is as follows. One of the essential components for the initiation of protein synthesis. Protects formylmethionyl-tRNA from spontaneous hydrolysis and promotes its binding to the 30S ribosomal subunits. Also involved in the hydrolysis of GTP during the formation of the 70S ribosomal complex. This Chlorobium chlorochromatii (strain CaD3) protein is Translation initiation factor IF-2.